An 84-amino-acid chain; its full sequence is Small ribosomal subunit protein eS27 (84 aa).

Residues 1–16 (MPLAKDPLHPSPEEEK) are compositionally biased toward basic and acidic residues. Residues 1 to 25 (MPLAKDPLHPSPEEEKRKHKKKRLV) are disordered. S11 bears the Phosphoserine mark. The C4-type zinc-finger motif lies at 38-60 (PGCYKITTVFSHAQTVVLCVGCS).

Belongs to the eukaryotic ribosomal protein eS27 family. As to quaternary structure, component of the small ribosomal subunit. Part of the small subunit (SSU) processome, composed of more than 70 proteins and the RNA chaperone small nucleolar RNA (snoRNA) U3. The cofactor is Zn(2+).

It localises to the cytoplasm. The protein localises to the nucleus. It is found in the nucleolus. In terms of biological role, component of the small ribosomal subunit. The ribosome is a large ribonucleoprotein complex responsible for the synthesis of proteins in the cell. Required for proper rRNA processing and maturation of 18S rRNAs. Part of the small subunit (SSU) processome, first precursor of the small eukaryotic ribosomal subunit. During the assembly of the SSU processome in the nucleolus, many ribosome biogenesis factors, an RNA chaperone and ribosomal proteins associate with the nascent pre-rRNA and work in concert to generate RNA folding, modifications, rearrangements and cleavage as well as targeted degradation of pre-ribosomal RNA by the RNA exosome. This chain is Small ribosomal subunit protein eS27 (RPS27), found in Pongo abelii (Sumatran orangutan).